Here is a 1374-residue protein sequence, read N- to C-terminus: Probable multidrug resistance-associated protein lethal(2)03659 (1374 aa).

The segment at 1 to 40 (MDKQPVLEPTFDSVSERENTSIEESSLLENNGFDHRNKDE) is disordered. 6 helical membrane-spanning segments follow: residues 159–179 (LLRV…VVEL), 205–225 (AGFY…MILT), 282–302 (YTVH…YLMY), 305–325 (IGIS…IQMY), 404–424 (IFLS…EIAF), and 426–446 (ITAY…SAII). Residues 168 to 449 (GFPGLAIFVV…YVPSAIIQTA (282 aa)) enclose the ABC transmembrane type-1 1 domain. The disordered stretch occupies residues 466–492 (ELGSSDKSEGPSKDTVPGNPPSNNNEA). The 224-residue stretch at 499-722 (ISIRDLKAKW…GLITGLGSLS (224 aa)) folds into the ABC transporter 1 domain. 534–541 (GLTGSGKS) provides a ligand contact to ATP. N-linked (GlcNAc...) asparagine glycosylation is present at N561. Residues 723 to 766 (KTDKAKTEEQEPLNLNSPDNKNEVTPIKENSEQTVGGSSSGKEH) form a disordered region. The next 5 helical transmembrane spans lie at 787–807 (GGGL…QVAV), 845–865 (LIII…FNIA), 913–933 (VVLV…IVIA), 938–958 (LLLV…NLYL), and 1025–1045 (YCMN…FFAF). The 287-residue stretch at 793–1079 (FLVMLSSSVL…GVRQTAELEN (287 aa)) folds into the ABC transmembrane type-1 2 domain. The ABC transporter 2 domain occupies 1119–1352 (FKELNLRYTP…SDSKVFHNLV (234 aa)). ATP is bound at residue 1153–1160 (GRTGAGKS). N-linked (GlcNAc...) asparagine glycans are attached at residues N1254 and N1353.

The protein belongs to the ABC transporter superfamily. ABCC family. Conjugate transporter (TC 3.A.1.208) subfamily. As to expression, uniform expression in embryos.

The protein resides in the membrane. Vital for development. The protein is Probable multidrug resistance-associated protein lethal(2)03659 (l(2)03659) of Drosophila melanogaster (Fruit fly).